Consider the following 536-residue polypeptide: uncharacterized protein (536 aa).

Disordered stretches follow at residues 1–76 and 204–237; these read MSFT…SPAS and NWNSSSSFTSSTSSTPISSSYSSSGTLPSKSNKS. 2 stretches are compositionally biased toward low complexity: residues 7–76 and 204–234; these read TSSV…SPAS and NWNSSSSFTSSTSSTPISSSYSSSGTLPSKS. Residues 247–267 form a helical membrane-spanning segment; that stretch reads CSVAIPVGVVLILIGLGIFLW. 2 disordered regions span residues 287–354 and 373–536; these read YGFN…LLGG and DASD…LNLF. Residues 290 to 326 show a composition bias toward polar residues; sequence NPNQPSNFRSPNRAPSTNNRYRGWNGSPTPAAGNNTN. The segment covering 327 to 350 has biased composition (low complexity); sequence GRPVAPRPSAGAGGANPPAASQPG. Residues 351-371 traverse the membrane as a helical segment; sequence LLGGSSNSAGPIAAATAAGVG. A compositionally biased stretch (polar residues) spans 403 to 424; that stretch reads SASNEAEATMPPSNGSNFSEGL. Positions 430-454 are enriched in low complexity; the sequence is ESGPAVGAAGAAAEAAEHSGSGSDS. The span at 480 to 509 shows a compositional bias: polar residues; it reads SYGSRAALSSRSQSNLLSPTSTGASNQPNY. Positions 517-527 are enriched in low complexity; the sequence is SSSNVSIPRSS.

It is found in the membrane. This is an uncharacterized protein from Schizosaccharomyces pombe (strain 972 / ATCC 24843) (Fission yeast).